The sequence spans 677 residues: uncharacterized protein (677 aa).

The tract at residues 1–87 (MGRHSKPDPE…PTGAEPIAAA (87 aa)) is disordered. Positions 17–29 (SDGHAAEQQHWED) are enriched in basic and acidic residues. A compositionally biased stretch (low complexity) spans 51–64 (GHYSAVGGYSASGS). A run of 4 helical transmembrane segments spans residues 115-135 (VSIGVIVALVAVVVMVAGVIL), 192-212 (VAVAVTSAGSDAVINGFIGKW), 313-333 (EAVAAASAPAGAPATAGIGAV), and 474-494 (ATLADTMVTASAGVAATIMLD).

The protein localises to the cell membrane. This is an uncharacterized protein from Mycobacterium tuberculosis (strain CDC 1551 / Oshkosh).